The primary structure comprises 396 residues: 1-deoxy-D-xylulose 5-phosphate reductoisomerase (396 aa).

Positions 10, 11, 12, 13, 38, and 124 each coordinate NADPH. Lysine 125 serves as a coordination point for 1-deoxy-D-xylulose 5-phosphate. Glutamate 126 serves as a coordination point for NADPH. Aspartate 150 is a binding site for Mn(2+). 1-deoxy-D-xylulose 5-phosphate-binding residues include serine 151, glutamate 152, serine 179, and histidine 202. Glutamate 152 provides a ligand contact to Mn(2+). Glycine 208 serves as a coordination point for NADPH. 4 residues coordinate 1-deoxy-D-xylulose 5-phosphate: serine 215, asparagine 220, lysine 221, and glutamate 224. Position 224 (glutamate 224) interacts with Mn(2+).

This sequence belongs to the DXR family. Requires Mg(2+) as cofactor. It depends on Mn(2+) as a cofactor.

It catalyses the reaction 2-C-methyl-D-erythritol 4-phosphate + NADP(+) = 1-deoxy-D-xylulose 5-phosphate + NADPH + H(+). It participates in isoprenoid biosynthesis; isopentenyl diphosphate biosynthesis via DXP pathway; isopentenyl diphosphate from 1-deoxy-D-xylulose 5-phosphate: step 1/6. Functionally, catalyzes the NADPH-dependent rearrangement and reduction of 1-deoxy-D-xylulose-5-phosphate (DXP) to 2-C-methyl-D-erythritol 4-phosphate (MEP). The protein is 1-deoxy-D-xylulose 5-phosphate reductoisomerase of Ralstonia pickettii (strain 12J).